The primary structure comprises 152 residues: S-ribosylhomocysteine lyase (152 aa).

Residues H53, H57, and C120 each contribute to the Fe cation site.

This sequence belongs to the LuxS family. Homodimer. It depends on Fe cation as a cofactor.

It carries out the reaction S-(5-deoxy-D-ribos-5-yl)-L-homocysteine = (S)-4,5-dihydroxypentane-2,3-dione + L-homocysteine. Its function is as follows. Involved in the synthesis of autoinducer 2 (AI-2) which is secreted by bacteria and is used to communicate both the cell density and the metabolic potential of the environment. The regulation of gene expression in response to changes in cell density is called quorum sensing. Catalyzes the transformation of S-ribosylhomocysteine (RHC) to homocysteine (HC) and 4,5-dihydroxy-2,3-pentadione (DPD). In Enterococcus faecalis (strain ATCC 700802 / V583), this protein is S-ribosylhomocysteine lyase.